The primary structure comprises 999 residues: Probable beta-galactosidase C (999 aa).

The N-terminal stretch at 1 to 21 is a signal peptide; the sequence is MFFFRFLTTVLLLFNAKLLVA. Asparagine 25 carries N-linked (GlcNAc...) asparagine glycosylation. 4 residues coordinate substrate: tyrosine 80, asparagine 125, glutamate 127, and asparagine 185. Glutamate 186 (proton donor) is an active-site residue. An N-linked (GlcNAc...) asparagine glycan is attached at asparagine 195. Tyrosine 249 lines the substrate pocket. Cysteine 255 and cysteine 302 are oxidised to a cystine. A glycan (N-linked (GlcNAc...) asparagine) is linked at asparagine 274. Glutamate 285 serves as the catalytic Nucleophile. Residue tyrosine 351 coordinates substrate. 10 N-linked (GlcNAc...) asparagine glycosylation sites follow: asparagine 389, asparagine 441, asparagine 512, asparagine 519, asparagine 600, asparagine 675, asparagine 713, asparagine 757, asparagine 808, and asparagine 897.

The protein belongs to the glycosyl hydrolase 35 family.

It localises to the secreted. It carries out the reaction Hydrolysis of terminal non-reducing beta-D-galactose residues in beta-D-galactosides.. In terms of biological role, cleaves beta-linked terminal galactosyl residues from gangliosides, glycoproteins, and glycosaminoglycans. In Talaromyces marneffei (strain ATCC 18224 / CBS 334.59 / QM 7333) (Penicillium marneffei), this protein is Probable beta-galactosidase C (lacC).